The following is a 118-amino-acid chain: Large ribosomal subunit protein bL17 (118 aa).

The protein belongs to the bacterial ribosomal protein bL17 family. As to quaternary structure, part of the 50S ribosomal subunit. Contacts protein L32.

This is Large ribosomal subunit protein bL17 from Phytoplasma mali (strain AT).